The following is a 358-amino-acid chain: MTESPTTHHGAAPPDSVATPVRPWSEFRLTPAEAAAAAALAARCAQRYDETDGPEFLLDAPVIAHELPRRLRTFMARARLDAWPHALVVRGNPVDDAALGSTPVHWRTARTPGSRPLSFLLMLYAGLLGDVFGWATQQDGRVVTDVLPIKGGEHTLVSSSSRQELGWHTEDAFSPYRADYVGLLSLRNPDGVATTLAGVPLDDLDERTLDVLFQERFLIRPDDSHLQVNNSTAQQGRVEFEGIAQAADRPEPVAILTGHRAAPHLRVDGDFSAPAEGDEEAAAALGTLRKLIDASLYELVLDQGDVAFIDNRRAVHGRRAFQPRYDGRDRWLKRINITRDLHRSRKAWAGDSRVLGQR.

Residues 1-21 (MTESPTTHHGAAPPDSVATPV) are disordered. A helical transmembrane segment spans residues 117–135 (LSFLLMLYAGLLGDVFGWA). 156-158 (LVS) contributes to the L-arginine binding site. Fe cation is bound by residues histidine 168 and glutamate 170. Threonine 194 is a 2-oxoglutarate binding site. 268–270 (DGD) is an L-arginine binding site. Histidine 316 is a binding site for Fe cation. The 2-oxoglutarate site is built by arginine 330 and arginine 334. Arginine 334 is an L-arginine binding site.

This sequence belongs to the clavaminate synthase family. Fe cation is required as a cofactor.

The protein resides in the membrane. It catalyses the reaction L-arginine + 2-oxoglutarate + O2 = (2S,3S)-hydroxyarginine + succinate + CO2. The protein operates within antibiotic biosynthesis. In terms of biological role, involved in the biosynthesis of capreomycidine, an unusual amino acid used by non-ribosomal peptide synthases (NRPS) to make the tuberactinomycin class of peptide antibiotics such as viomycin and capreomycin. Catalyzes the stereospecific hydroxylation of the C3 of (2S)-arginine to generate (3S)-hydroxy-(2S)-arginine. Usually clavaminic acid synthase-like oxygenases catalyze the formation of threo diastereomers, however VioC produces the erythro diastereomer of beta-carbon-hydroxylated L-arginine. It exerts a broad substrate specificity by accepting the analogs L-homoarginine and L-canavanine for the beta-carbon hydroxylation. The chain is Alpha-ketoglutarate-dependent L-arginine hydroxylase (vioC) from Streptomyces vinaceus.